The chain runs to 187 residues: MQSEKFDINDLKRRMQGASQALQHELGGLRTGRAAASMLEPVQVDAYGTHMPLNQLATVTVPEPRLLSVQVWDKSMVRAVEKAIVDSNLGLSPATEGQVLRLRIPELNQDRRKELVKVAHKYAEAARVAVRHVRRDGLDTIKKLEKSHEISEDDQKRLDQEVQKATDSAISEIDQLLASKEKEILTV.

The protein belongs to the RRF family.

The protein resides in the cytoplasm. In terms of biological role, responsible for the release of ribosomes from messenger RNA at the termination of protein biosynthesis. May increase the efficiency of translation by recycling ribosomes from one round of translation to another. The polypeptide is Ribosome-recycling factor (Rhodopseudomonas palustris (strain HaA2)).